A 393-amino-acid chain; its full sequence is NADH-quinone oxidoreductase subunit D (393 aa).

The protein belongs to the complex I 49 kDa subunit family. In terms of assembly, NDH-1 is composed of 14 different subunits. Subunits NuoB, C, D, E, F, and G constitute the peripheral sector of the complex.

The protein resides in the cell inner membrane. The catalysed reaction is a quinone + NADH + 5 H(+)(in) = a quinol + NAD(+) + 4 H(+)(out). NDH-1 shuttles electrons from NADH, via FMN and iron-sulfur (Fe-S) centers, to quinones in the respiratory chain. The immediate electron acceptor for the enzyme in this species is believed to be ubiquinone. Couples the redox reaction to proton translocation (for every two electrons transferred, four hydrogen ions are translocated across the cytoplasmic membrane), and thus conserves the redox energy in a proton gradient. The protein is NADH-quinone oxidoreductase subunit D of Ehrlichia ruminantium (strain Gardel).